The chain runs to 263 residues: Endonuclease 8 (263 aa).

Residue Pro2 is the Schiff-base intermediate with DNA of the active site. Glu3 functions as the Proton donor in the catalytic mechanism. Lys53 functions as the Proton donor; for beta-elimination activity in the catalytic mechanism. Positions 70, 125, and 169 each coordinate DNA. An FPG-type zinc finger spans residues 229–263 (KVFHRDGELCERCGGIIEKTTLSSRPFYWCPGCQH). Arg253 functions as the Proton donor; for delta-elimination activity in the catalytic mechanism.

The protein belongs to the FPG family. It depends on Zn(2+) as a cofactor.

The catalysed reaction is 2'-deoxyribonucleotide-(2'-deoxyribose 5'-phosphate)-2'-deoxyribonucleotide-DNA = a 3'-end 2'-deoxyribonucleotide-(2,3-dehydro-2,3-deoxyribose 5'-phosphate)-DNA + a 5'-end 5'-phospho-2'-deoxyribonucleoside-DNA + H(+). Involved in base excision repair of DNA damaged by oxidation or by mutagenic agents. Acts as a DNA glycosylase that recognizes and removes damaged bases. Has a preference for oxidized pyrimidines, such as thymine glycol, 5,6-dihydrouracil and 5,6-dihydrothymine. Has AP (apurinic/apyrimidinic) lyase activity and introduces nicks in the DNA strand. Cleaves the DNA backbone by beta-delta elimination to generate a single-strand break at the site of the removed base with both 3'- and 5'-phosphates. The protein is Endonuclease 8 of Escherichia coli (strain 55989 / EAEC).